Reading from the N-terminus, the 443-residue chain is 23S rRNA (uracil(1939)-C(5))-methyltransferase RlmD (443 aa).

Positions 4–66 (QNRFDRTSFQ…RHFDEARVVE (63 aa)) constitute a TRAM domain. Positions 79, 85, 88, and 167 each coordinate [4Fe-4S] cluster. Residues Q275, F304, N309, E325, D352, and D373 each coordinate S-adenosyl-L-methionine. Catalysis depends on C399, which acts as the Nucleophile.

The protein belongs to the class I-like SAM-binding methyltransferase superfamily. RNA M5U methyltransferase family. RlmD subfamily.

The catalysed reaction is uridine(1939) in 23S rRNA + S-adenosyl-L-methionine = 5-methyluridine(1939) in 23S rRNA + S-adenosyl-L-homocysteine + H(+). In terms of biological role, catalyzes the formation of 5-methyl-uridine at position 1939 (m5U1939) in 23S rRNA. The polypeptide is 23S rRNA (uracil(1939)-C(5))-methyltransferase RlmD (Xylella fastidiosa (strain 9a5c)).